Consider the following 195-residue polypeptide: MNLSTIGFQVIFKQRLRCVRFGVRCISRETLGCNSVAASSADEDDKIYVPKKPILSPIDQSKVEEPPVFDKALITHLERLSLVWFTDEQAVFNLKEAVRFANQLKLVDTTGIEPLETLLEDMPCPLREDVADNPMTKAEVLMNAAKVVEDYFVAPLENIPLEESDKLNLTKVEEFDRRVMAKKNLLNDSVKEKTE.

A mitochondrion-targeting transit peptide spans 1-18 (MNLSTIGFQVIFKQRLRC).

Belongs to the GatC family. As to quaternary structure, subunit of the heterotrimeric GatCAB amidotransferase (AdT) complex, composed of A, B and C subunits.

It is found in the mitochondrion. The enzyme catalyses L-glutamyl-tRNA(Gln) + L-glutamine + ATP + H2O = L-glutaminyl-tRNA(Gln) + L-glutamate + ADP + phosphate + H(+). Functionally, allows the formation of correctly charged Gln-tRNA(Gln) through the transamidation of misacylated Glu-tRNA(Gln) in the mitochondria. The reaction takes place in the presence of glutamine and ATP through an activated gamma-phospho-Glu-tRNA(Gln). The sequence is that of Glutamyl-tRNA(Gln) amidotransferase subunit C, mitochondrial from Brugia malayi (Filarial nematode worm).